Consider the following 431-residue polypeptide: Adenylosuccinate synthetase (431 aa).

GTP-binding positions include 12–18 (GDEGKGK) and 40–42 (GHT). D13 acts as the Proton acceptor in catalysis. Residues D13 and G40 each contribute to the Mg(2+) site. Residues 13–16 (DEGK), 38–41 (NAGH), T129, R143, Q224, T239, and R303 contribute to the IMP site. Residue H41 is the Proton donor of the active site. Residue 299–305 (VTTGRAR) participates in substrate binding. Residues R305, 331–333 (KLD), and 413–415 (GVG) each bind GTP.

The protein belongs to the adenylosuccinate synthetase family. As to quaternary structure, homodimer. Mg(2+) serves as cofactor.

The protein resides in the cytoplasm. The catalysed reaction is IMP + L-aspartate + GTP = N(6)-(1,2-dicarboxyethyl)-AMP + GDP + phosphate + 2 H(+). Its pathway is purine metabolism; AMP biosynthesis via de novo pathway; AMP from IMP: step 1/2. Plays an important role in the de novo pathway of purine nucleotide biosynthesis. Catalyzes the first committed step in the biosynthesis of AMP from IMP. The sequence is that of Adenylosuccinate synthetase from Mycobacteroides abscessus (strain ATCC 19977 / DSM 44196 / CCUG 20993 / CIP 104536 / JCM 13569 / NCTC 13031 / TMC 1543 / L948) (Mycobacterium abscessus).